A 130-amino-acid polypeptide reads, in one-letter code: MTRTSVLADALNAINNAEKTGKRQVLIRPSSKVIIKFLQVMQKHGYIGEFEYIDDHRSGKIVVQLNGRLNKCGVISPRFNVKISDVEKWTANLLPARQFGYVILTTSAGIMDHEEAHRKHVSGKILGFVY.

Belongs to the universal ribosomal protein uS8 family.

The chain is Small ribosomal subunit protein uS8 (RPS22) from Kluyveromyces marxianus (Yeast).